A 228-amino-acid chain; its full sequence is HTH-type transcriptional regulator TfdT (228 aa).

The HTH lysR-type domain maps to 1–58 (MEIRQLKYFVAVAEAGGFGTAAQRMHISQPPLTRQIQALERDIGAKLFERTARGVELT). The H-T-H motif DNA-binding region spans 18–37 (FGTAAQRMHISQPPLTRQIQ).

The protein belongs to the LysR transcriptional regulatory family.

The protein resides in the cytoplasm. In terms of biological role, does not seem to be involved in the regulation of 3-chlorocatechol degradation. Does not activate the expression of its presumed target operon, tfdCDEF. The chain is HTH-type transcriptional regulator TfdT (tfdT) from Cupriavidus pinatubonensis (strain JMP 134 / LMG 1197) (Cupriavidus necator (strain JMP 134)).